We begin with the raw amino-acid sequence, 439 residues long: tRNA-2-methylthio-N(6)-dimethylallyladenosine synthase (439 aa).

Residues 2–116 form the MTTase N-terminal domain; the sequence is LKVYIETMGC…ISQVIHKEKA (115 aa). [4Fe-4S] cluster is bound by residues Cys11, Cys47, Cys79, Cys149, Cys153, and Cys156. Residues 135-368 form the Radical SAM core domain; sequence KKAEVRSLLN…QNRHKEILEE (234 aa). The TRAM domain occupies 371–437; the sequence is RLEVGKTHVV…KGRLMATTKN (67 aa).

It belongs to the methylthiotransferase family. MiaB subfamily. As to quaternary structure, monomer. Requires [4Fe-4S] cluster as cofactor.

It localises to the cytoplasm. It catalyses the reaction N(6)-dimethylallyladenosine(37) in tRNA + (sulfur carrier)-SH + AH2 + 2 S-adenosyl-L-methionine = 2-methylsulfanyl-N(6)-dimethylallyladenosine(37) in tRNA + (sulfur carrier)-H + 5'-deoxyadenosine + L-methionine + A + S-adenosyl-L-homocysteine + 2 H(+). Functionally, catalyzes the methylthiolation of N6-(dimethylallyl)adenosine (i(6)A), leading to the formation of 2-methylthio-N6-(dimethylallyl)adenosine (ms(2)i(6)A) at position 37 in tRNAs that read codons beginning with uridine. The polypeptide is tRNA-2-methylthio-N(6)-dimethylallyladenosine synthase (Helicobacter acinonychis (strain Sheeba)).